The primary structure comprises 205 residues: Adenylyl-sulfate kinase (205 aa).

31 to 38 (GLSGAGKS) contacts ATP. S105 (phosphoserine intermediate) is an active-site residue.

It belongs to the APS kinase family.

The enzyme catalyses adenosine 5'-phosphosulfate + ATP = 3'-phosphoadenylyl sulfate + ADP + H(+). It functions in the pathway sulfur metabolism; hydrogen sulfide biosynthesis; sulfite from sulfate: step 2/3. In terms of biological role, catalyzes the synthesis of activated sulfate. The sequence is that of Adenylyl-sulfate kinase from Shewanella sp. (strain MR-4).